A 466-amino-acid chain; its full sequence is Citrate synthase, mitochondrial (466 aa).

The transit peptide at 1-27 (MALLTAAARLLGAKNSSCLVLAARHAS) directs the protein to the mitochondrion. An SIFI-degron motif is present at residues 2–21 (ALLTAAARLLGAKNSSCLVL). An N6-succinyllysine modification is found at lysine 57. Lysine 76 bears the N6-acetyllysine; alternate mark. Lysine 76 carries the N6-succinyllysine; alternate modification. N6-succinyllysine occurs at positions 103 and 193. Serine 226 carries the phosphoserine modification. Histidine 301 is a catalytic residue. Residues lysine 321 and lysine 327 each carry the N6-acetyllysine; alternate modification. Residues lysine 321 and lysine 327 each carry the N6-succinyllysine; alternate modification. The active site involves histidine 347. Oxaloacetate is bound at residue arginine 356. Position 375 is an N6-acetyllysine; alternate (lysine 375). Lysine 375 is subject to N6-succinyllysine; alternate. Lysine 382 bears the N6-acetyllysine mark. N6-acetyllysine; alternate is present on lysine 393. An N6-succinyllysine; alternate modification is found at lysine 393. Lysine 395 carries the N6,N6,N6-trimethyllysine modification. The active site involves aspartate 402. Arginine 428 and arginine 448 together coordinate oxaloacetate. Lysine 450 carries the N6-succinyllysine modification. Lysine 459 is modified (N6-acetyllysine; alternate). The residue at position 459 (lysine 459) is an N6-succinyllysine; alternate.

This sequence belongs to the citrate synthase family. As to quaternary structure, homodimer. Methylated. Trimethylation at Lys-395 by CSKMT decreases citrate synthase activity. Post-translationally, in response to mitochondrial stress, the precursor protein is ubiquitinated by the SIFI complex in the cytoplasm before mitochondrial import, leading to its degradation. Within the SIFI complex, UBR4 initiates ubiquitin chain that are further elongated or branched by KCMF1. In terms of tissue distribution, expressed in the head region and flagellum of epididymal sperm.

The protein localises to the mitochondrion matrix. The enzyme catalyses oxaloacetate + acetyl-CoA + H2O = citrate + CoA + H(+). It participates in carbohydrate metabolism; tricarboxylic acid cycle; isocitrate from oxaloacetate: step 1/2. Functionally, key enzyme of the Krebs tricarboxylic acid cycle which catalyzes the synthesis of citrate from acetyl coenzyme A and oxaloacetate. The polypeptide is Citrate synthase, mitochondrial (Cs) (Rattus norvegicus (Rat)).